Here is a 525-residue protein sequence, read N- to C-terminus: Keratin, type II cytoskeletal 4 (525 aa).

Residues 1–145 form a head region; sequence MIARQSSVRG…DPEIQKIRTA (145 aa). Arg-13 is modified (omega-N-methylarginine). The tract at residues 146–181 is coil 1A; the sequence is EREQIKTLNNKFASFIDKVRFLEQQNKVLETKWNLL. An IF rod domain is found at 146-459; that stretch reads EREQIKTLNN…KLLEGEECRM (314 aa). The segment at 182-200 is linker 1; the sequence is QQQTTTTSPKSLDPFFETY. The segment at 201 to 292 is coil 1B; it reads INALRKNLDT…VLYEAELAQM (92 aa). The segment at 293 to 316 is linker 12; sequence QTHVSDTSVVLSMDNNRNLDLDGI. Positions 317–455 are coil 2; that stretch reads IAEVRAQYED…ATYRKLLEGE (139 aa). Residues 456-524 form a tail region; sequence ECRMSGECKS…SSATITKRSP (69 aa).

Belongs to the intermediate filament family. Heterotetramer of two type I and two type II keratins. Keratin-4 is generally associated with keratin-13. Expressed in the dorsal and ventral epithelium of the tongue. Highest expression levels are detected in the suprabasal layer with low levels detected in the basal cell layer. Within the suprabasal layer expression is highest in the spinous cells, decreases in the granular cells and is not detected in the stratum corneum.

This Mus musculus (Mouse) protein is Keratin, type II cytoskeletal 4 (Krt4).